Here is a 155-residue protein sequence, read N- to C-terminus: Small ribosomal subunit protein uS7c (155 aa).

This sequence belongs to the universal ribosomal protein uS7 family. In terms of assembly, part of the 30S ribosomal subunit.

The protein resides in the plastid. It localises to the chloroplast. One of the primary rRNA binding proteins, it binds directly to 16S rRNA where it nucleates assembly of the head domain of the 30S subunit. The protein is Small ribosomal subunit protein uS7c (rps7) of Gunnera chilensis (Chilean rhubarb).